The primary structure comprises 310 residues: Methionyl-tRNA formyltransferase (310 aa).

Residue 111–114 (SLLP) coordinates (6S)-5,6,7,8-tetrahydrofolate.

The protein belongs to the Fmt family.

The enzyme catalyses L-methionyl-tRNA(fMet) + (6R)-10-formyltetrahydrofolate = N-formyl-L-methionyl-tRNA(fMet) + (6S)-5,6,7,8-tetrahydrofolate + H(+). In terms of biological role, attaches a formyl group to the free amino group of methionyl-tRNA(fMet). The formyl group appears to play a dual role in the initiator identity of N-formylmethionyl-tRNA by promoting its recognition by IF2 and preventing the misappropriation of this tRNA by the elongation apparatus. The chain is Methionyl-tRNA formyltransferase from Rhodopseudomonas palustris (strain BisB18).